The chain runs to 570 residues: nebramycin 5' synthase (570 aa).

Residues 1–354 are kae1-like; it reads MRVLGLNGWP…AAAAVAVELG (354 aa). Tobramycin is bound at residue D12. Residue H14 is the Proton acceptor of the active site. K39 contacts ATP. 3 residues coordinate Fe cation: H114, H118, and D137. Residues Q139, G168, and E172 each coordinate carbamoyl adenylate. 2 residues coordinate tobramycin: E172 and D228. Residues G310 and N314 each coordinate carbamoyl adenylate. D338 contributes to the Fe cation binding site. A yrdC-like region spans residues 367–570; that stretch reads GPEFSPDQVR…PYLVTKDLRH (204 aa). ATP contacts are provided by R418 and R449. Position 418-419 (418-419) interacts with carbamoyl phosphate; it reads RA. Carbamoyl phosphate-binding positions include R498 and 528 to 530; that span reads NTS.

The protein belongs to the NodU/CmcH family. Fe(2+) serves as cofactor.

The enzyme catalyses tobramycin + carbamoyl phosphate + ATP + H2O = nebramycin 5' + AMP + phosphate + diphosphate + H(+). The catalysed reaction is kanamycin A + carbamoyl phosphate + ATP + H2O = 6''-O-carbamoylkanamycin A + AMP + phosphate + diphosphate + H(+). It carries out the reaction carbamoyl phosphate + ATP + H2O = carbamoyl adenylate + phosphate + diphosphate. It catalyses the reaction tobramycin + carbamoyl adenylate = nebramycin 5' + AMP + H(+). The enzyme catalyses carbamoyl adenylate + kanamycin A = 6''-O-carbamoylkanamycin A + AMP + H(+). The protein operates within antibiotic biosynthesis; kanamycin biosynthesis. Its pathway is antibiotic biosynthesis; tobramycin biosynthesis. Its activity is regulated as follows. ADP inhibits the formation of nebramycin 5'. In terms of biological role, tobZ is involved in the biosynthesis of the 2-deoxystreptamine-containing aminoglycoside antibiotics such as nebramycin 5 and 6-O-carbamoylkanamycin. Catalyzes the hydrolysis of carbamoyl phosphate and its subsequent adenylation by ATP to yield O-carbamoyladenylate. Then it catalyzes the transfer of the carbamoyl moiety from O-carbamoyladenylate to the tobramycin 6-hydroxy group to yield nebramycin 5'. It catalyzes the same reaction with kanamycin A. These reactions are considerably slower in the presence of deoxy-ATP. In Streptoalloteichus tenebrarius (strain ATCC 17920 / DSM 40477 / JCM 4838 / CBS 697.72 / NBRC 16177 / NCIMB 11028 / NRRL B-12390 / A12253. 1 / ISP 5477) (Streptomyces tenebrarius), this protein is nebramycin 5' synthase (tobZ).